Reading from the N-terminus, the 490-residue chain is MNTQQLAKLRTFVPEMRRVRQIHFVGIGGAGMGGIAEVLANEGYQISGSDLAPNAVTQQLTDLGAQIYFNHRPENISDASVVVVSSAIAADNPEIVAAKEVRIPVIQRAEMLAELMRFRHGIAIAGTHGKTTTTAMVASIYAEAGLDPTFVNGGLVKAAGVHARLGCSRYLIAEADESDASFLHLQPMVAIITNIEADHMDTYQGDFENLKQTFINFLHNLPFYGRAVMCIDDPVIRELLPRVGRQITTYGFSDDADLRITDYRQDGARGSFTFTRQEKADLRVELNAPGRHNALNAVAAIAVATEEGINDESILQAMLQFQGTGRRFDDLGHYDLVNVNGKTGEVMLVDDYGHHPTEVDATIKAARAGWPDKRLVMVFQPHRYTRTRDLYDDFANVLSGVDVLLMLDVYPAGEAPIPGADSRSLCRTIRGRGKVDPILVPDMETLPATLAQVLQDNDLVLMQGAGTVGKIARKLADSRLQPQPGEGRHG.

126–132 serves as a coordination point for ATP; it reads GTHGKTT.

It belongs to the MurCDEF family.

The protein resides in the cytoplasm. The enzyme catalyses UDP-N-acetyl-alpha-D-muramate + L-alanine + ATP = UDP-N-acetyl-alpha-D-muramoyl-L-alanine + ADP + phosphate + H(+). Its pathway is cell wall biogenesis; peptidoglycan biosynthesis. Its function is as follows. Cell wall formation. The sequence is that of UDP-N-acetylmuramate--L-alanine ligase from Sodalis glossinidius (strain morsitans).